Here is a 756-residue protein sequence, read N- to C-terminus: MRTSQAIFILIFLDSVRNQSPQVIPAKWDVVYEKETGHNMSLTVFRFQVKEQYSVARIIMSCNESTEHNPLLAVFREKLAILSLQVPLIVDNYEYSQVARTLCPFTEYKEGEAFTVEVTSSRPVHYNFRAELVQNFYLYNNSQRLVTASASEPVYLRYDIPGDVDSVAVHLDSNSTICMTVSVQKIGCPVFDLPDNVNSMGLHQTMTTSATIPVEKSRMSSFYVVFVVNTNDDLCSEILSIKPNKPTKFPLRMKSFNVTIESSMKIFDYTIPIVFWACILLLVTIVVFVYHYFDGIWERRFVSRAYTHLEDNAQEQRIRDFYDFQRMSEDDDLKDYDLLTDCQDMMVVRAKASLTVADLSMTPYEERELKYDVYKIALAIIGIFYNITVLQLIISKAGSLRQSGDLDECTFNFQCARPLWYFVAFNNVVSNGGYVYFGTLIIVMNYCRERSFRRLFAVQPTLAERYGLPQHSGLMTAIGLAVIMEGISSATYHVCPNNINYQFDTALMYVIGMLGKLKIWSLRHPDMVVSAYHAFGFLGVFLMAAIAGVYVHNMIFWALFSIIYIASMLLVSLEFYFKGIWTLNLRELRNSIRLSWVSSRHLSCVVPAYKARFFVILLLNIANTAVVVYGLEAHPKDFLSFLLIPFIGNLFIYIIYYILMKMIYREKIPKRAIALLFAAVISWTCAGILFNQRVSDWSKMPAISRELNKPCIFLNFYDNHDLWHLSSAFAIFFSFTAINVIDDDLMFVMRNTIRVF.

An N-terminal signal peptide occupies residues methionine 1–asparagine 18. The Extracellular portion of the chain corresponds to glutamine 19–aspartate 268. Asparagine 39 and asparagine 63 each carry an N-linked (GlcNAc...) asparagine glycan. Positions valine 124–arginine 129 match the Cholesterol-binding sequence motif motif. N-linked (GlcNAc...) asparagine glycans are attached at residues asparagine 140, asparagine 174, and asparagine 257. Residues tyrosine 269 to valine 289 form a helical membrane-spanning segment. The Cytoplasmic segment spans residues tyrosine 290–valine 373. The helical transmembrane segment at tyrosine 374–isoleucine 394 threads the bilayer. The Extracellular segment spans residues serine 395 to tyrosine 421. A helical transmembrane segment spans residues phenylalanine 422–isoleucine 442. Topologically, residues valine 443 to glycine 473 are cytoplasmic. Residues leucine 474–valine 494 traverse the membrane as a helical segment. At cysteine 495–asparagine 498 the chain is on the extracellular side. Residues isoleucine 499 to leucine 517 form a helical membrane-spanning segment. The Cytoplasmic portion of the chain corresponds to lysine 518–serine 530. The chain crosses the membrane as a helical span at residues alanine 531 to valine 551. At histidine 552–methionine 554 the chain is on the extracellular side. The chain crosses the membrane as a helical span at residues isoleucine 555–phenylalanine 575. The short motif at leucine 570 to lysine 578 is the Cholesterol-binding sequence motif element. At tyrosine 576–arginine 612 the chain is on the cytoplasmic side. A helical transmembrane segment spans residues phenylalanine 613–alanine 633. The Extracellular portion of the chain corresponds to histidine 634–aspartate 637. The chain crosses the membrane as a helical span at residues phenylalanine 638–isoleucine 658. The Cytoplasmic segment spans residues leucine 659–arginine 671. The helical transmembrane segment at alanine 672–glutamine 692 threads the bilayer. The Extracellular portion of the chain corresponds to arginine 693 to alanine 728. A helical transmembrane segment spans residues phenylalanine 729–methionine 749. Residues arginine 750 to phenylalanine 756 are Cytoplasmic-facing.

Belongs to the SID1 family. In terms of tissue distribution, highly expressed along the intestine with expression also detected in the pharynx, especially at the terminal bulb, and in the excretory gland cells.

It is found in the cell membrane. The catalysed reaction is cholesterol(in) = cholesterol(out). Cholesterol-binding protein which is involved in dietary cholesterol uptake from the environment. Does not play a role in double-stranded RNA transport in contrast to other SID1 family members. In Caenorhabditis elegans, this protein is Cholesterol uptake protein 1.